Here is a 313-residue protein sequence, read N- to C-terminus: Porphobilinogen deaminase (313 aa).

At C242 the chain carries S-(dipyrrolylmethanemethyl)cysteine.

It belongs to the HMBS family. As to quaternary structure, monomer. Dipyrromethane is required as a cofactor.

The catalysed reaction is 4 porphobilinogen + H2O = hydroxymethylbilane + 4 NH4(+). Its pathway is porphyrin-containing compound metabolism; protoporphyrin-IX biosynthesis; coproporphyrinogen-III from 5-aminolevulinate: step 2/4. Functionally, tetrapolymerization of the monopyrrole PBG into the hydroxymethylbilane pre-uroporphyrinogen in several discrete steps. The protein is Porphobilinogen deaminase of Shigella flexneri.